A 392-amino-acid polypeptide reads, in one-letter code: Histidinol-phosphate aminotransferase (392 aa).

Positions 1–24 are disordered; the sequence is MSAVLKDPIPAPGRPESTRPEPRP. N6-(pyridoxal phosphate)lysine is present on K236.

This sequence belongs to the class-II pyridoxal-phosphate-dependent aminotransferase family. Histidinol-phosphate aminotransferase subfamily. In terms of assembly, homodimer. It depends on pyridoxal 5'-phosphate as a cofactor.

The enzyme catalyses L-histidinol phosphate + 2-oxoglutarate = 3-(imidazol-4-yl)-2-oxopropyl phosphate + L-glutamate. It participates in amino-acid biosynthesis; L-histidine biosynthesis; L-histidine from 5-phospho-alpha-D-ribose 1-diphosphate: step 7/9. The sequence is that of Histidinol-phosphate aminotransferase from Xanthobacter autotrophicus (strain ATCC BAA-1158 / Py2).